Reading from the N-terminus, the 284-residue chain is Nucleotide-binding protein PP_0949 (284 aa).

Residue 8–15 (GRSGSGKS) participates in ATP binding. A GTP-binding site is contributed by 60–63 (DARN).

This sequence belongs to the RapZ-like family.

Its function is as follows. Displays ATPase and GTPase activities. The sequence is that of Nucleotide-binding protein PP_0949 from Pseudomonas putida (strain ATCC 47054 / DSM 6125 / CFBP 8728 / NCIMB 11950 / KT2440).